Reading from the N-terminus, the 497-residue chain is MAAYILAIDQGTTSSRALLVRRDGTIAALAQEELPQHFPASGEVEQEAEDIWNTVLSCCRVVLRQAGVGPSDIAAIGITNQRETTLVWERATGRAIHRAIVWQDRRTADTCARLEAEGHGALIRARTGLLIDPYFSATKIAHILEKVPGARARAEKGELAFGTVDSFLLFRLTGGRVHATDATNASRTMLFDIHKGAWDDDLLALFGVPRALLPEVRDCAAEFGATDPEMFGAPIPIRGMAGDQQAAMVGQACFQPGMVKSTYGTGCFALLNTGETPVASRHRLITTIAYQIEGRRTYALEGSIFVAGAAVQWLRDGLKMISHAAESDRLAAEADEGQDVILVPAFVGLGAPYWRPQVRGALFGLTRATGPAELARAALEAVCFQTCDLIDAMHADWPGQSGATVLRVDGGMSASDFTMQRLADLLGAPVDRPAETETTVLGAAYLAGLQCGFFPPPDIFAQGWRLERRFVPAMADEVRAMRLAAWRSAVECLIGRD.

Residue Thr12 coordinates ADP. Residues Thr12, Thr13, and Ser14 each contribute to the ATP site. Position 12 (Thr12) interacts with sn-glycerol 3-phosphate. Arg16 is an ADP binding site. Residues Arg82, Glu83, Tyr134, and Asp243 each contribute to the sn-glycerol 3-phosphate site. Positions 82, 83, 134, 243, and 244 each coordinate glycerol. ADP is bound by residues Thr265 and Gly308. Thr265, Gly308, Gln312, and Gly411 together coordinate ATP. Gly411 contributes to the ADP binding site.

Belongs to the FGGY kinase family.

It catalyses the reaction glycerol + ATP = sn-glycerol 3-phosphate + ADP + H(+). It functions in the pathway polyol metabolism; glycerol degradation via glycerol kinase pathway; sn-glycerol 3-phosphate from glycerol: step 1/1. Inhibited by fructose 1,6-bisphosphate (FBP). Key enzyme in the regulation of glycerol uptake and metabolism. Catalyzes the phosphorylation of glycerol to yield sn-glycerol 3-phosphate. In Xanthobacter autotrophicus (strain ATCC BAA-1158 / Py2), this protein is Glycerol kinase.